The sequence spans 375 residues: Beta sliding clamp (375 aa).

It belongs to the beta sliding clamp family. As to quaternary structure, forms a ring-shaped head-to-tail homodimer around DNA which binds and tethers DNA polymerases and other proteins to the DNA. The DNA replisome complex has a single clamp-loading complex (3 tau and 1 each of delta, delta', psi and chi subunits) which binds 3 Pol III cores (1 core on the leading strand and 2 on the lagging strand) each with a beta sliding clamp dimer. Additional proteins in the replisome are other copies of gamma, psi and chi, Ssb, DNA helicase and RNA primase.

The protein resides in the cytoplasm. Its function is as follows. Confers DNA tethering and processivity to DNA polymerases and other proteins. Acts as a clamp, forming a ring around DNA (a reaction catalyzed by the clamp-loading complex) which diffuses in an ATP-independent manner freely and bidirectionally along dsDNA. Initially characterized for its ability to contact the catalytic subunit of DNA polymerase III (Pol III), a complex, multichain enzyme responsible for most of the replicative synthesis in bacteria; Pol III exhibits 3'-5' exonuclease proofreading activity. The beta chain is required for initiation of replication as well as for processivity of DNA replication. In Mycoplasma capricolum subsp. capricolum (strain California kid / ATCC 27343 / NCTC 10154), this protein is Beta sliding clamp (dnaN).